The sequence spans 191 residues: Prostaglandin-H2 D-isomerase (191 aa).

The N-terminal stretch at 1 to 28 is a signal peptide; it reads MATPNRLWMALLLLGVLGVLQTPAPAQA. N-linked (GlcNAc...) asparagine glycosylation occurs at Asn51. Cys65 serves as the catalytic Nucleophile. A glycan (N-linked (GlcNAc...) asparagine) is linked at Asn78. A disulfide bond links Cys89 and Cys186.

The protein belongs to the calycin superfamily. Lipocalin family. In terms of assembly, monomer. In terms of tissue distribution, in the male reproductive system, expressed in the testis, epididymis and prostate, and secreted into the seminal fluid.

Its subcellular location is the rough endoplasmic reticulum. The protein resides in the nucleus membrane. It localises to the golgi apparatus. It is found in the cytoplasm. The protein localises to the perinuclear region. Its subcellular location is the secreted. The enzyme catalyses prostaglandin H2 = prostaglandin D2. In terms of biological role, catalyzes the conversion of PGH2 to PGD2, a prostaglandin involved in smooth muscle contraction/relaxation and a potent inhibitor of platelet aggregation. Involved in a variety of CNS functions, such as sedation, NREM sleep and PGE2-induced allodynia, and may have an anti-apoptotic role in oligodendrocytes. Binds small non-substrate lipophilic molecules, including biliverdin, bilirubin, retinal, retinoic acid and thyroid hormone, and may act as a scavenger for harmful hydrophobic molecules and as a secretory retinoid and thyroid hormone transporter. Possibly involved in development and maintenance of the blood-brain, blood-retina, blood-aqueous humor and blood-testis barrier. It is likely to play important roles in both maturation and maintenance of the central nervous system and male reproductive system. Involved in PLA2G3-dependent maturation of mast cells. PLA2G3 is secreted by immature mast cells and acts on nearby fibroblasts upstream to PTDGS to synthesize PGD2, which in turn promotes mast cell maturation and degranulation via PTGDR. This Bos taurus (Bovine) protein is Prostaglandin-H2 D-isomerase (PTGDS).